The sequence spans 440 residues: Enolase 1 (440 aa).

Residues His161 and Glu170 each coordinate substrate. The active-site Proton donor is the Glu213. Positions 248, 297, and 324 each coordinate Mg(2+). Substrate-binding residues include Glu297 and Asp324. Catalysis depends on Lys349, which acts as the Proton acceptor. Substrate is bound by residues 376-379 (SHRS) and Lys400.

Belongs to the enolase family. As to quaternary structure, homodimer. It depends on Mg(2+) as a cofactor.

The protein localises to the cytoplasm. The catalysed reaction is (2R)-2-phosphoglycerate = phosphoenolpyruvate + H2O. It participates in carbohydrate degradation; glycolysis; pyruvate from D-glyceraldehyde 3-phosphate: step 4/5. The protein is Enolase 1 (ENO1) of Candida albicans (strain SC5314 / ATCC MYA-2876) (Yeast).